The chain runs to 134 residues: Protein NrdI (134 aa).

The protein belongs to the NrdI family.

Probably involved in ribonucleotide reductase function. The sequence is that of Protein NrdI from Rhizobium etli (strain CIAT 652).